The following is a 258-amino-acid chain: 6-phosphogluconolactonase (258 aa).

A2 is modified (N-acetylalanine). Phosphoserine is present on S49. K180 is modified (N6-acetyllysine).

This sequence belongs to the glucosamine/galactosamine-6-phosphate isomerase family. 6-phosphogluconolactonase subfamily.

Its subcellular location is the cytoplasm. It carries out the reaction 6-phospho-D-glucono-1,5-lactone + H2O = 6-phospho-D-gluconate + H(+). It participates in carbohydrate degradation; pentose phosphate pathway; D-ribulose 5-phosphate from D-glucose 6-phosphate (oxidative stage): step 2/3. In terms of biological role, hydrolysis of 6-phosphogluconolactone to 6-phosphogluconate. The sequence is that of 6-phosphogluconolactonase from Homo sapiens (Human).